The sequence spans 419 residues: UDP-N-acetylglucosamine 1-carboxyvinyltransferase (419 aa).

22–23 serves as a coordination point for phosphoenolpyruvate; the sequence is KN. R93 lines the UDP-N-acetyl-alpha-D-glucosamine pocket. C117 serves as the catalytic Proton donor. C117 carries the 2-(S-cysteinyl)pyruvic acid O-phosphothioketal modification. UDP-N-acetyl-alpha-D-glucosamine contacts are provided by D307 and I329.

This sequence belongs to the EPSP synthase family. MurA subfamily.

It is found in the cytoplasm. The catalysed reaction is phosphoenolpyruvate + UDP-N-acetyl-alpha-D-glucosamine = UDP-N-acetyl-3-O-(1-carboxyvinyl)-alpha-D-glucosamine + phosphate. The protein operates within cell wall biogenesis; peptidoglycan biosynthesis. Cell wall formation. Adds enolpyruvyl to UDP-N-acetylglucosamine. This chain is UDP-N-acetylglucosamine 1-carboxyvinyltransferase, found in Shewanella frigidimarina (strain NCIMB 400).